The sequence spans 344 residues: Aspartate carbamoyltransferase catalytic subunit (344 aa).

Residues 1–30 are disordered; that stretch reads MPESPPLPKRSPLMTSSTTRPASDYPPGGD. Carbamoyl phosphate contacts are provided by R88 and T89. K116 provides a ligand contact to L-aspartate. R138, H166, and Q169 together coordinate carbamoyl phosphate. Residues R199 and R253 each coordinate L-aspartate. Carbamoyl phosphate-binding residues include G294 and P295.

It belongs to the aspartate/ornithine carbamoyltransferase superfamily. ATCase family. In terms of assembly, heterododecamer (2C3:3R2) of six catalytic PyrB chains organized as two trimers (C3), and six regulatory PyrI chains organized as three dimers (R2).

It catalyses the reaction carbamoyl phosphate + L-aspartate = N-carbamoyl-L-aspartate + phosphate + H(+). It participates in pyrimidine metabolism; UMP biosynthesis via de novo pathway; (S)-dihydroorotate from bicarbonate: step 2/3. In terms of biological role, catalyzes the condensation of carbamoyl phosphate and aspartate to form carbamoyl aspartate and inorganic phosphate, the committed step in the de novo pyrimidine nucleotide biosynthesis pathway. The protein is Aspartate carbamoyltransferase catalytic subunit of Sphingopyxis alaskensis (strain DSM 13593 / LMG 18877 / RB2256) (Sphingomonas alaskensis).